A 276-amino-acid chain; its full sequence is NADPH-dependent 7-cyano-7-deazaguanine reductase (276 aa).

80–82 (VES) lines the substrate pocket. 82–83 (SK) serves as a coordination point for NADPH. Cys183 (thioimide intermediate) is an active-site residue. The active-site Proton donor is Asp190. Substrate is bound at residue 222-223 (HE). NADPH is bound at residue 251-252 (RG).

Belongs to the GTP cyclohydrolase I family. QueF type 2 subfamily. In terms of assembly, homodimer.

It is found in the cytoplasm. The catalysed reaction is 7-aminomethyl-7-carbaguanine + 2 NADP(+) = 7-cyano-7-deazaguanine + 2 NADPH + 3 H(+). It participates in tRNA modification; tRNA-queuosine biosynthesis. Its function is as follows. Catalyzes the NADPH-dependent reduction of 7-cyano-7-deazaguanine (preQ0) to 7-aminomethyl-7-deazaguanine (preQ1). The protein is NADPH-dependent 7-cyano-7-deazaguanine reductase of Burkholderia orbicola (strain MC0-3).